Consider the following 390-residue polypeptide: Chorismate synthase (390 aa).

Residues arginine 48 and arginine 54 each coordinate NADP(+). Residues 125–127 (RSS), 238–239 (NA), glycine 278, 293–297 (KPTSS), and arginine 319 contribute to the FMN site. The disordered stretch occupies residues 360–390 (KVPGNIINPTNPVTTQPDVRRAEDPEPDENS). Residues 366-376 (INPTNPVTTQP) show a composition bias toward polar residues.

This sequence belongs to the chorismate synthase family. As to quaternary structure, homotetramer. Requires FMNH2 as cofactor.

The enzyme catalyses 5-O-(1-carboxyvinyl)-3-phosphoshikimate = chorismate + phosphate. The protein operates within metabolic intermediate biosynthesis; chorismate biosynthesis; chorismate from D-erythrose 4-phosphate and phosphoenolpyruvate: step 7/7. Catalyzes the anti-1,4-elimination of the C-3 phosphate and the C-6 proR hydrogen from 5-enolpyruvylshikimate-3-phosphate (EPSP) to yield chorismate, which is the branch point compound that serves as the starting substrate for the three terminal pathways of aromatic amino acid biosynthesis. This reaction introduces a second double bond into the aromatic ring system. In Nitrosomonas eutropha (strain DSM 101675 / C91 / Nm57), this protein is Chorismate synthase.